We begin with the raw amino-acid sequence, 312 residues long: Pyridoxal kinase (312 aa).

Met-1 carries the N-acetylmethionine modification. Residues Ser-12 and Thr-47 each contribute to the pyridoxal site. Thr-47 lines the pyridoxal 5'-phosphate pocket. Residue Ser-59 is modified to Phosphoserine. Asp-113 is an ATP binding site. Residue Asp-113 participates in Na(+) binding. Asp-118 serves as a coordination point for Mg(2+). Residue Thr-148 participates in Na(+) binding. Residues 150–153 (NQFE) and 186–187 (TS) each bind ATP. Residue Thr-186 coordinates Na(+). Ser-213 is modified (phosphoserine). Residues 226 to 228 (VDA) and Thr-233 contribute to the ATP site. Residue 234–235 (GD) coordinates pyridoxal 5'-phosphate. Catalysis depends on Asp-235, which acts as the Proton acceptor. Ser-285 carries the post-translational modification Phosphoserine.

It belongs to the pyridoxine kinase family. As to quaternary structure, homodimer. Zn(2+) serves as cofactor. It depends on Mg(2+) as a cofactor.

Its subcellular location is the cytoplasm. The protein resides in the cytosol. It catalyses the reaction pyridoxal + ATP = pyridoxal 5'-phosphate + ADP + H(+). The catalysed reaction is pyridoxamine + ATP = pyridoxamine 5'-phosphate + ADP + H(+). The enzyme catalyses pyridoxine + ATP = pyridoxine 5'-phosphate + ADP + H(+). Its pathway is cofactor metabolism; pyridoxal 5'-phosphate salvage; pyridoxal 5'-phosphate from pyridoxal: step 1/1. It functions in the pathway cofactor metabolism; pyridoxal 5'-phosphate salvage; pyridoxine 5'-phosphate from pyridoxine: step 1/1. It participates in cofactor metabolism; pyridoxal 5'-phosphate salvage; pyridoxamine 5'-phosphate from pyridoxamine: step 1/1. With respect to regulation, activity is increased in the presence of K(+)or Na(+). In terms of biological role, catalyzes the phosphorylation of the dietary vitamin B6 vitamers pyridoxal (PL), pyridoxine (PN) and pyridoxamine (PM) to form pyridoxal 5'-phosphate (PLP), pyridoxine 5'-phosphate (PNP) and pyridoxamine 5'-phosphate (PMP), respectively. PLP is the active form of vitamin B6, and acts as a cofactor for over 140 different enzymatic reactions. The polypeptide is Pyridoxal kinase (PDXK) (Bos taurus (Bovine)).